Here is a 133-residue protein sequence, read N- to C-terminus: Ribonuclease P protein component (133 aa).

This sequence belongs to the RnpA family. As to quaternary structure, consists of a catalytic RNA component (M1 or rnpB) and a protein subunit.

It carries out the reaction Endonucleolytic cleavage of RNA, removing 5'-extranucleotides from tRNA precursor.. Its function is as follows. RNaseP catalyzes the removal of the 5'-leader sequence from pre-tRNA to produce the mature 5'-terminus. It can also cleave other RNA substrates such as 4.5S RNA. The protein component plays an auxiliary but essential role in vivo by binding to the 5'-leader sequence and broadening the substrate specificity of the ribozyme. In Pseudomonas savastanoi pv. phaseolicola (strain 1448A / Race 6) (Pseudomonas syringae pv. phaseolicola (strain 1448A / Race 6)), this protein is Ribonuclease P protein component.